A 225-amino-acid polypeptide reads, in one-letter code: Class E basic helix-loop-helix protein 23 (225 aa).

Positions 35–104 (EAARGYGTPG…PREQRSLRLS (70 aa)) are disordered. The 55-residue stretch at 100-154 (SLRLSINARERRRMHDLNDALDGLRAVIPYAHSPSVRKLSKIATLLLAKNYILMQ) folds into the bHLH domain.

It is found in the nucleus. May function as transcriptional repressor. May modulate the expression of genes required for the differentiation and/or maintenance of pancreatic and neuronal cell types. May be important for rod bipolar cell maturation. This chain is Class E basic helix-loop-helix protein 23 (BHLHE23), found in Homo sapiens (Human).